We begin with the raw amino-acid sequence, 178 residues long: N-alpha-acetyltransferase 20 (178 aa).

The N-acetyltransferase domain occupies 2-157 (TTLRAFTCDD…DAYDMRKALS (156 aa)).

It belongs to the acetyltransferase family. ARD1 subfamily. As to quaternary structure, component of the N-terminal acetyltransferase B (NatB) complex which is composed of NAA20 and NAA25.

Its subcellular location is the cytoplasm. The protein localises to the nucleus. It carries out the reaction N-terminal L-methionyl-L-asparaginyl-[protein] + acetyl-CoA = N-terminal N(alpha)-acetyl-L-methionyl-L-asparaginyl-[protein] + CoA + H(+). It catalyses the reaction N-terminal L-methionyl-L-glutaminyl-[protein] + acetyl-CoA = N-terminal N(alpha)-acetyl-L-methionyl-L-glutaminyl-[protein] + CoA + H(+). The enzyme catalyses N-terminal L-methionyl-L-aspartyl-[protein] + acetyl-CoA = N-terminal N(alpha)-acetyl-L-methionyl-L-aspartyl-[protein] + CoA + H(+). The catalysed reaction is N-terminal L-methionyl-L-glutamyl-[protein] + acetyl-CoA = N-terminal N(alpha)-acetyl-L-methionyl-L-glutamyl-[protein] + CoA + H(+). Catalytic subunit of the NatB complex which catalyzes acetylation of the N-terminal methionine residues of peptides beginning with Met-Asp, Met-Glu, Met-Asn and Met-Gln. Proteins with cell cycle functions are overrepresented in the pool of NatB substrates. Required for maintaining the structure and function of actomyosin fibers and for proper cellular migration. This Homo sapiens (Human) protein is N-alpha-acetyltransferase 20 (NAA20).